Here is a 297-residue protein sequence, read N- to C-terminus: 4-hydroxy-tetrahydrodipicolinate synthase (297 aa).

Pyruvate is bound at residue threonine 47. The active-site Proton donor/acceptor is the tyrosine 135. Lysine 163 acts as the Schiff-base intermediate with substrate in catalysis. Isoleucine 205 serves as a coordination point for pyruvate.

It belongs to the DapA family. In terms of assembly, homotetramer; dimer of dimers.

It is found in the cytoplasm. The catalysed reaction is L-aspartate 4-semialdehyde + pyruvate = (2S,4S)-4-hydroxy-2,3,4,5-tetrahydrodipicolinate + H2O + H(+). Its pathway is amino-acid biosynthesis; L-lysine biosynthesis via DAP pathway; (S)-tetrahydrodipicolinate from L-aspartate: step 3/4. Functionally, catalyzes the condensation of (S)-aspartate-beta-semialdehyde [(S)-ASA] and pyruvate to 4-hydroxy-tetrahydrodipicolinate (HTPA). This Cytophaga hutchinsonii (strain ATCC 33406 / DSM 1761 / CIP 103989 / NBRC 15051 / NCIMB 9469 / D465) protein is 4-hydroxy-tetrahydrodipicolinate synthase.